Consider the following 340-residue polypeptide: Phosphoribosylformylglycinamidine cyclo-ligase (340 aa).

The protein belongs to the AIR synthase family.

It localises to the cytoplasm. The enzyme catalyses 2-formamido-N(1)-(5-O-phospho-beta-D-ribosyl)acetamidine + ATP = 5-amino-1-(5-phospho-beta-D-ribosyl)imidazole + ADP + phosphate + H(+). Its pathway is purine metabolism; IMP biosynthesis via de novo pathway; 5-amino-1-(5-phospho-D-ribosyl)imidazole from N(2)-formyl-N(1)-(5-phospho-D-ribosyl)glycinamide: step 2/2. The chain is Phosphoribosylformylglycinamidine cyclo-ligase from Streptococcus pneumoniae (strain 70585).